A 433-amino-acid polypeptide reads, in one-letter code: MSLKIKFLLLLVLYHHVDSASIVKFLPGFEGPLPFELETGYIGIGEDENVQFFYYFIKSENNPKEDPLLIWLNGGPGCSCLGGIIFENGPVGLKFEVFNGSAPSLFSTTYSWTKMANIIFLDQPVGSGFSYSKTPIDKTGDISEVKRTHEFLQKWLSRHPQYFSNPLYVVGDSYSGMIVPALVQEISQGNYICCEPPINLQGYMLGNPVTYMDFEQNFRIPYAYGMGLISDEIYEPMKRICNGNYYNVDPSNTQCLKLTEEYHKCTAKINIHHILTPDCDVTNVTSPDCYYYPYHLIECWANDESVREALHIEKGSKGKWARCNRTIPYNHDIVSSIPYHMNNSISGYRSLIYSGDHDIAVPFLATQAWIRSLNYSPIHNWRPWMINNQIAGYTRAYSNKMTFATIKGGGHTAEYRPNETFIMFQRWISGQPL.

A signal peptide spans 1–19; sequence MSLKIKFLLLLVLYHHVDS. 3 cysteine pairs are disulfide-bonded: C78-C323, C241-C255, and C279-C289. A glycan (N-linked (GlcNAc...) asparagine) is linked at N99. S173 is an active-site residue. N-linked (GlcNAc...) asparagine glycans are attached at residues N283, N324, and N342. Active-site residues include D358 and H411. N-linked (GlcNAc...) asparagine glycosylation occurs at N418.

This sequence belongs to the peptidase S10 family. Post-translationally, N-glycosylated. As to expression, highly expressed in seedlings. Expressed in leaves, stems, flowers and siliques, and at low levels in roots.

It is found in the vacuole. The catalysed reaction is 1-O-(trans-sinapoyl)-beta-D-glucose + (S)-malate = sinapoyl (S)-malate + D-glucose. It catalyses the reaction 2 1-O-(trans-sinapoyl)-beta-D-glucose = 1,2-di-O-sinapoyl beta-D-glucose + D-glucose. Its activity is regulated as follows. 95% inhibition by diisopropyl fluorophosphate (DFP) and 30% by phenylmethylsulfonyl fluoride (PMSF). Its function is as follows. Involved in plants secondary metabolism. Functions as acyltransferase to form the sinapate ester sinapoylmalate. Also capable of catalyzing the formation of 1,2-bis-O-sinapoyl beta-D-glucoside. This is Serine carboxypeptidase-like 8 from Arabidopsis thaliana (Mouse-ear cress).